An 819-amino-acid polypeptide reads, in one-letter code: Lysine-specific demethylase JMJ18 (819 aa).

The interval 1–39 (MENPPLESEIKEDMSLKNHPPDKDKDKDTIMEQPSSPRH) is disordered. The segment covering 8-30 (SEIKEDMSLKNHPPDKDKDKDTI) has biased composition (basic and acidic residues). A JmjN domain is found at 59–100 (APVFTPSLEEFVDPLAYIEKIRPLAEPYGICRIIPPSTWKPP). The tract at residues 120 to 171 (TVDLLQNREPMKKKPKSRKRKRRRNSRMGSSKRRSGSSPAESTSSPEAEEKF) is disordered. The Nuclear localization signal signature appears at 130-137 (MKKKPKSR). The segment covering 130–154 (MKKKPKSRKRKRRRNSRMGSSKRRS) has biased composition (basic residues). A compositionally biased stretch (low complexity) spans 155–165 (GSSPAESTSSP). Residues 261–427 (QYTLSGWNLN…HGQNAVELYS (167 aa)) enclose the JmjC domain. Residues His-307, Glu-309, and His-395 each coordinate Fe cation. 8 residues coordinate Zn(2+): Cys-519, Cys-522, Cys-533, Cys-535, Cys-542, His-545, Cys-550, and Cys-552. The C5HC2 zinc finger occupies 519-571 (CFSCFYDLHLSASGCKCSPEEYACLKHADDLCSCDVKDGFILLRYTMDELSSL). The region spanning 644 to 702 (ASENLGVSVEPINLGFLIFGKLWCNKYAIFPKGFRSRVKFYNVLDPTRMSNYISEVLDA) is the FYR N-terminal domain. An FYR C-terminal domain is found at 704 to 788 (LMGPLFRVTL…HRLVEYWNHK (85 aa)).

The protein belongs to the JARID1 histone demethylase family. It depends on Fe(2+) as a cofactor. As to expression, expressed in vascular tissues of roots, cotyledons, leaves and flowers. Expressed predominantly in phloem companion cells of roots. Present in inflorescences, roots, siliques, leaves and stems.

Its subcellular location is the nucleus. The enzyme catalyses N(6),N(6),N(6)-trimethyl-L-lysyl(4)-[histone H3] + 2-oxoglutarate + O2 = N(6),N(6)-dimethyl-L-lysyl(4)-[histone H3] + formaldehyde + succinate + CO2. It catalyses the reaction N(6),N(6)-dimethyl-L-lysyl(4)-[histone H3] + 2-oxoglutarate + O2 = N(6)-methyl-L-lysyl(4)-[histone H3] + formaldehyde + succinate + CO2. Functionally, histone demethylase that demethylates 'Lys-4' (H3K4me) of histone H3 with a specific activity for H3K4me3 and H3K4me2. No activity on H3K9me3/2, H3K27me3/2 and H3K36me3/2. Involved in the control of flowering time by demethylating H3K4me3 at the FLC locus and repressing its expression. The repression of FLC level and reduction in H3K4me3 at the FLC locus results in induction of the flowering activator FT, which is a downstream target of FLC. The polypeptide is Lysine-specific demethylase JMJ18 (Arabidopsis thaliana (Mouse-ear cress)).